The chain runs to 68 residues: Wasabi receptor toxin (68 aa).

The first 21 residues, 1–21 (MKYFTLALTLLFLLLINPCKD), serve as a signal peptide directing secretion. The propeptide occupies 22 to 35 (MNFAWAESSEKVER). Intrachain disulfides connect C44–C62 and C48–C58.

Belongs to the short scorpion toxin superfamily. Potassium channel inhibitor kappa-KTx family. Kappa-KTx 1 subfamily. Monomer. Expressed by the venom gland.

It localises to the secreted. The protein resides in the host cytoplasm. Cell-penetrating peptide (CPP) with defensive purpose that induces pain by specifically activating mammalian sensory neuron TRPA1 channels. It non-covalently binds to the same region than other TRPA1 agonists (irritants), but acts via a distinct biochemical mechanism. Its binding stabilizes the TRPA1 open state and diminishes calcium-permeability. Consequently, it produces pain and pain hypersensitivity, but fails to trigger efferent release of neuropeptides (CGRP) and neurogenic inflammation typically produced by noxious electrophiles. Is not active on voltage-gated potassium channels and other TRP channels. This chain is Wasabi receptor toxin, found in Urodacus manicatus (Black rock scorpion).